Consider the following 166-residue polypeptide: Monodehydroascorbate reductase, fruit isozyme (166 aa).

This sequence belongs to the FAD-dependent oxidoreductase family. FAD is required as a cofactor. In terms of processing, the N-terminus is blocked.

The catalysed reaction is 2 monodehydro-L-ascorbate radical + NADH + H(+) = 2 L-ascorbate + NAD(+). In terms of biological role, catalyzes the conversion of monodehydroascorbate to ascorbate, oxidizing NADH in the process. This is Monodehydroascorbate reductase, fruit isozyme from Cucumis sativus (Cucumber).